Reading from the N-terminus, the 113-residue chain is Large ribosomal subunit protein uL22 (113 aa).

The protein belongs to the universal ribosomal protein uL22 family. As to quaternary structure, part of the 50S ribosomal subunit.

This protein binds specifically to 23S rRNA; its binding is stimulated by other ribosomal proteins, e.g. L4, L17, and L20. It is important during the early stages of 50S assembly. It makes multiple contacts with different domains of the 23S rRNA in the assembled 50S subunit and ribosome. Functionally, the globular domain of the protein is located near the polypeptide exit tunnel on the outside of the subunit, while an extended beta-hairpin is found that lines the wall of the exit tunnel in the center of the 70S ribosome. This chain is Large ribosomal subunit protein uL22, found in Opitutus terrae (strain DSM 11246 / JCM 15787 / PB90-1).